The chain runs to 145 residues: Early nodulin-like protein 21 (145 aa).

Residues 1-17 (MFLWLVIVLTISASVSS) form the signal peptide. The Phytocyanin domain maps to 18–116 (YEHKLNWVVP…GQKMIVEVIS (99 aa)). Asparagine 30 and asparagine 71 each carry an N-linked (GlcNAc...) asparagine glycan. Cysteine 70 and cysteine 104 form a disulfide bridge. Serine 116 is lipidated: GPI-anchor amidated serine. Positions 117–145 (RDHTTTSAAPPAAFAVLLCFFSLSLYFVA) are cleaved as a propeptide — removed in mature form.

This sequence belongs to the early nodulin-like (ENODL) family. Mostly expressed in leaves and flowers, and, to a lower extent, in roots and stems, but barely in seedlings and seeds.

The protein localises to the cell membrane. May act as a carbohydrate transporter. This is Early nodulin-like protein 21 from Arabidopsis thaliana (Mouse-ear cress).